The primary structure comprises 101 residues: Aspartyl/glutamyl-tRNA(Asn/Gln) amidotransferase subunit C (101 aa).

The protein belongs to the GatC family. As to quaternary structure, heterotrimer of A, B and C subunits.

It catalyses the reaction L-glutamyl-tRNA(Gln) + L-glutamine + ATP + H2O = L-glutaminyl-tRNA(Gln) + L-glutamate + ADP + phosphate + H(+). The catalysed reaction is L-aspartyl-tRNA(Asn) + L-glutamine + ATP + H2O = L-asparaginyl-tRNA(Asn) + L-glutamate + ADP + phosphate + 2 H(+). Its function is as follows. Allows the formation of correctly charged Asn-tRNA(Asn) or Gln-tRNA(Gln) through the transamidation of misacylated Asp-tRNA(Asn) or Glu-tRNA(Gln) in organisms which lack either or both of asparaginyl-tRNA or glutaminyl-tRNA synthetases. The reaction takes place in the presence of glutamine and ATP through an activated phospho-Asp-tRNA(Asn) or phospho-Glu-tRNA(Gln). In Lactobacillus delbrueckii subsp. bulgaricus (strain ATCC 11842 / DSM 20081 / BCRC 10696 / JCM 1002 / NBRC 13953 / NCIMB 11778 / NCTC 12712 / WDCM 00102 / Lb 14), this protein is Aspartyl/glutamyl-tRNA(Asn/Gln) amidotransferase subunit C.